The primary structure comprises 361 residues: Phosphoserine aminotransferase (361 aa).

Residue R42 coordinates L-glutamate. Pyridoxal 5'-phosphate contacts are provided by residues 76 to 77, W102, T153, D173, and Q196; that span reads AR. Position 197 is an N6-(pyridoxal phosphate)lysine (K197). 238–239 is a pyridoxal 5'-phosphate binding site; the sequence is NT.

Belongs to the class-V pyridoxal-phosphate-dependent aminotransferase family. SerC subfamily. As to quaternary structure, homodimer. Requires pyridoxal 5'-phosphate as cofactor.

The protein resides in the cytoplasm. The catalysed reaction is O-phospho-L-serine + 2-oxoglutarate = 3-phosphooxypyruvate + L-glutamate. The enzyme catalyses 4-(phosphooxy)-L-threonine + 2-oxoglutarate = (R)-3-hydroxy-2-oxo-4-phosphooxybutanoate + L-glutamate. Its pathway is amino-acid biosynthesis; L-serine biosynthesis; L-serine from 3-phospho-D-glycerate: step 2/3. It functions in the pathway cofactor biosynthesis; pyridoxine 5'-phosphate biosynthesis; pyridoxine 5'-phosphate from D-erythrose 4-phosphate: step 3/5. Functionally, catalyzes the reversible conversion of 3-phosphohydroxypyruvate to phosphoserine and of 3-hydroxy-2-oxo-4-phosphonooxybutanoate to phosphohydroxythreonine. The chain is Phosphoserine aminotransferase from Yersinia pestis (strain Pestoides F).